The sequence spans 94 residues: Cell division topological specificity factor (94 aa).

It belongs to the MinE family.

In terms of biological role, prevents the cell division inhibition by proteins MinC and MinD at internal division sites while permitting inhibition at polar sites. This ensures cell division at the proper site by restricting the formation of a division septum at the midpoint of the long axis of the cell. The protein is Cell division topological specificity factor of Alkalilimnicola ehrlichii (strain ATCC BAA-1101 / DSM 17681 / MLHE-1).